We begin with the raw amino-acid sequence, 367 residues long: Nuclear hormone receptor-like 1 (367 aa).

The nuclear receptor DNA-binding region spans 32 to 107 (GQPCVVCGDD…NGMTKSLVLN (76 aa)). NR C4-type zinc fingers lie at residues 35–55 (CVVC…CEGC) and 71–95 (CKSI…FQKC). The NR LBD domain occupies 145 to 367 (EFQSRIDQVT…IANILLFKFT (223 aa)).

Belongs to the nuclear hormone receptor family.

The protein resides in the nucleus. The polypeptide is Nuclear hormone receptor-like 1 (nhr-1) (Onchocerca volvulus).